Here is a 374-residue protein sequence, read N- to C-terminus: Flagellar P-ring protein 1 (374 aa).

An N-terminal signal peptide occupies residues 1–29 (MPGVRWVRIVGVACAALSALALSVTSASA).

This sequence belongs to the FlgI family. In terms of assembly, the basal body constitutes a major portion of the flagellar organelle and consists of four rings (L,P,S, and M) mounted on a central rod.

It is found in the periplasm. Its subcellular location is the bacterial flagellum basal body. Assembles around the rod to form the L-ring and probably protects the motor/basal body from shearing forces during rotation. This is Flagellar P-ring protein 1 from Bradyrhizobium diazoefficiens (strain JCM 10833 / BCRC 13528 / IAM 13628 / NBRC 14792 / USDA 110).